The sequence spans 334 residues: Glucokinase-like protein PD_0680 (334 aa).

An ATP-binding site is contributed by Ala-18–Thr-23.

The protein belongs to the bacterial glucokinase family.

This chain is Glucokinase-like protein PD_0680, found in Xylella fastidiosa (strain Temecula1 / ATCC 700964).